The following is a 283-amino-acid chain: tRNA-cytidine(32) 2-sulfurtransferase (283 aa).

A PP-loop motif motif is present at residues 37–42; that stretch reads SGGKDS. Cysteine 112, cysteine 115, and cysteine 203 together coordinate [4Fe-4S] cluster.

Belongs to the TtcA family. As to quaternary structure, homodimer. Requires Mg(2+) as cofactor. [4Fe-4S] cluster serves as cofactor.

The protein localises to the cytoplasm. It carries out the reaction cytidine(32) in tRNA + S-sulfanyl-L-cysteinyl-[cysteine desulfurase] + AH2 + ATP = 2-thiocytidine(32) in tRNA + L-cysteinyl-[cysteine desulfurase] + A + AMP + diphosphate + H(+). The protein operates within tRNA modification. Functionally, catalyzes the ATP-dependent 2-thiolation of cytidine in position 32 of tRNA, to form 2-thiocytidine (s(2)C32). The sulfur atoms are provided by the cysteine/cysteine desulfurase (IscS) system. In Legionella pneumophila (strain Paris), this protein is tRNA-cytidine(32) 2-sulfurtransferase.